The sequence spans 368 residues: tRNA-specific 2-thiouridylase MnmA (368 aa).

ATP contacts are provided by residues 10–17 (AMSGGIDS) and M36. C106 serves as the catalytic Nucleophile. Residues C106 and C203 are joined by a disulfide bond. G130 provides a ligand contact to ATP. The tract at residues 152 to 154 (KDQ) is interaction with tRNA. C203 serves as the catalytic Cysteine persulfide intermediate. Positions 313 to 314 (RY) are interaction with tRNA.

This sequence belongs to the MnmA/TRMU family.

Its subcellular location is the cytoplasm. The catalysed reaction is S-sulfanyl-L-cysteinyl-[protein] + uridine(34) in tRNA + AH2 + ATP = 2-thiouridine(34) in tRNA + L-cysteinyl-[protein] + A + AMP + diphosphate + H(+). Its function is as follows. Catalyzes the 2-thiolation of uridine at the wobble position (U34) of tRNA, leading to the formation of s(2)U34. This Cytophaga hutchinsonii (strain ATCC 33406 / DSM 1761 / CIP 103989 / NBRC 15051 / NCIMB 9469 / D465) protein is tRNA-specific 2-thiouridylase MnmA.